Consider the following 201-residue polypeptide: Small ribosomal subunit protein uS4 (201 aa).

Positions 1-46 are disordered; that stretch reads MARYTGPRSRISRRFGEPVMGDSKALQKKNYAPGMHGRNKKRKQSE. Residues 92-151 form the S4 RNA-binding domain; that stretch reads ARLDNTVYRLGIASSRRAARQLVIHKHIVVNGDVVNIPSYQLKPGDQLGVREKSKSIEAI.

It belongs to the universal ribosomal protein uS4 family. Part of the 30S ribosomal subunit. Contacts protein S5. The interaction surface between S4 and S5 is involved in control of translational fidelity.

Its function is as follows. One of the primary rRNA binding proteins, it binds directly to 16S rRNA where it nucleates assembly of the body of the 30S subunit. With S5 and S12 plays an important role in translational accuracy. This chain is Small ribosomal subunit protein uS4, found in Cytophaga hutchinsonii (strain ATCC 33406 / DSM 1761 / CIP 103989 / NBRC 15051 / NCIMB 9469 / D465).